We begin with the raw amino-acid sequence, 389 residues long: Terminal nucleotidyltransferase 5D (389 aa).

The protein belongs to the TENT family. Restricted to testis.

The enzyme catalyses RNA(n) + ATP = RNA(n)-3'-adenine ribonucleotide + diphosphate. Functionally, catalyzes the transfer of one adenosine molecule from an ATP to an mRNA poly(A) tail bearing a 3'-OH terminal group. The polypeptide is Terminal nucleotidyltransferase 5D (Homo sapiens (Human)).